A 292-amino-acid chain; its full sequence is RNA 5'-monophosphate methyltransferase (292 aa).

A disordered region spans residues methionine 1 to arginine 22. Residues arginine 46, asparagine 76, aspartate 110, aspartate 135–phenylalanine 136, and methionine 164 contribute to the S-adenosyl-L-methionine site. Residues glutamate 53 to proline 274 form the Bin3-type SAM domain.

Belongs to the methyltransferase superfamily. Interacts with DICER1; the interaction may be mediated by RNA.

It is found in the cytoplasm. It carries out the reaction a 5'-end 5'-phospho-ribonucleoside-RNA + S-adenosyl-L-methionine = a 5'-end (5'-methylphospho)-ribonucleoside-RNA + S-adenosyl-L-homocysteine. The enzyme catalyses a 5'-end 5'-phospho-ribonucleoside-RNA + 2 S-adenosyl-L-methionine = a 5'-end (5'-bismethylphospho)-ribonucleoside-RNA + 2 S-adenosyl-L-homocysteine. Functionally, O-methyltransferase that specifically monomethylates 5'-monophosphate of cytoplasmic histidyl tRNA (tRNA(His)), acting as a capping enzyme by protecting tRNA(His) from cleavage by DICER1. Also able, with less efficiently, to methylate the 5' monophosphate of a subset of pre-miRNAs, acting as a negative regulator of miRNA processing. The 5' monophosphate of pre-miRNAs is recognized by DICER1 and is required for pre-miRNAs processing: methylation at this position reduces the processing of pre-miRNAs by DICER1. Was also reported to mediate dimethylation of pre-miR-145; however dimethylation cannot be reproduced by another group which observes a monomethylation of pre-miR-145. This is RNA 5'-monophosphate methyltransferase (BCDIN3D) from Bos taurus (Bovine).